The following is a 432-amino-acid chain: Adenylosuccinate synthetase (432 aa).

GTP contacts are provided by residues 12 to 18 (GDEGKGK) and 40 to 42 (GHT). The active-site Proton acceptor is aspartate 13. Residues aspartate 13 and glycine 40 each coordinate Mg(2+). IMP is bound by residues 13 to 16 (DEGK), 38 to 41 (NAGH), threonine 128, arginine 142, glutamine 223, threonine 238, and arginine 302. The active-site Proton donor is histidine 41. Position 298 to 304 (298 to 304 (TTTGRPR)) interacts with substrate. GTP contacts are provided by residues arginine 304, 330–332 (HLD), and 417–419 (GVG).

This sequence belongs to the adenylosuccinate synthetase family. As to quaternary structure, homodimer. Mg(2+) is required as a cofactor.

It localises to the cytoplasm. It catalyses the reaction IMP + L-aspartate + GTP = N(6)-(1,2-dicarboxyethyl)-AMP + GDP + phosphate + 2 H(+). Its pathway is purine metabolism; AMP biosynthesis via de novo pathway; AMP from IMP: step 1/2. Its function is as follows. Plays an important role in the de novo pathway of purine nucleotide biosynthesis. Catalyzes the first committed step in the biosynthesis of AMP from IMP. The chain is Adenylosuccinate synthetase from Symbiobacterium thermophilum (strain DSM 24528 / JCM 14929 / IAM 14863 / T).